A 190-amino-acid chain; its full sequence is Signal peptidase complex subunit 3 (190 aa).

Residues 1–9 (MFNIVTRFQ) lie on the Cytoplasmic side of the membrane. A helical; Signal-anchor for type II membrane protein transmembrane segment spans residues 10 to 32 (YAANQALTSSIIIAGIVIVSSLL). At 33-190 (QLYSNNAWSL…EYVDKKKEQK (158 aa)) the chain is on the lumenal side.

This sequence belongs to the SPCS3 family. As to quaternary structure, component of the signal peptidase complex (SPC) composed of a catalytic subunit SEC11 and three accessory subunits SPC1, SPC2 and SPC3. The complex induces a local thinning of the ER membrane which is used to measure the length of the signal peptide (SP) h-region of protein substrates. This ensures the selectivity of the complex towards h-regions shorter than 18-20 amino acids. SPC associates with the translocon complex.

It localises to the endoplasmic reticulum membrane. Functionally, essential component of the signal peptidase complex (SPC) which catalyzes the cleavage of N-terminal signal sequences from nascent proteins as they are translocated into the lumen of the endoplasmic reticulum. Essential for the SPC catalytic activity, possibly by stabilizing and positioning the active center of the complex close to the lumenal surface. Essential for viability. This is Signal peptidase complex subunit 3 (SPC3) from Debaryomyces hansenii (strain ATCC 36239 / CBS 767 / BCRC 21394 / JCM 1990 / NBRC 0083 / IGC 2968) (Yeast).